Consider the following 813-residue polypeptide: Sodium/hydrogen exchanger 2 (813 aa).

7 consecutive transmembrane segments (helical) span residues 108–128 (IVPE…IIFG), 139–159 (TDVF…YFMP), 170–190 (IFWY…LSLF), 210–230 (LFGS…FENI), 238–258 (ILVF…YNLF), 279–299 (FFVV…IAAF), and 309–329 (VIEP…AEMF). Asn351 carries N-linked (GlcNAc...) asparagine glycosylation. Transmembrane regions (helical) follow at residues 362–382 (YFMK…MGVS), 393–413 (AFVC…VFVL), 431–451 (FIIA…FLLP), and 460–480 (LFIT…GITI). The span at 649–661 (LRKDNSLNRERRA) shows a compositional bias: basic and acidic residues. Disordered regions lie at residues 649–709 (LRKD…NLQP) and 736–813 (DVGS…NEKP). The segment covering 687–696 (VSNADGNSSD) has biased composition (polar residues). Basic and acidic residues-rich tracts occupy residues 770-781 (KDQRFGRGREDS) and 797-813 (RASE…NEKP).

It belongs to the monovalent cation:proton antiporter 1 (CPA1) transporter (TC 2.A.36) family. As to quaternary structure, interacts with CHP1 and CHP2. Predominantly in small intestine, colon, and stomach, with much lower levels in skeletal muscle, kidney, brain, testis, uterus, heart and lung.

It localises to the apical cell membrane. It carries out the reaction Na(+)(in) + H(+)(out) = Na(+)(out) + H(+)(in). With respect to regulation, li(+) activates Na(+)/H(+) exchanger. In terms of biological role, plasma membrane Na(+)/H(+) antiporter. Mediates the electroneutral exchange of intracellular H(+) ions for extracellular Na(+). Major apical Na(+)/H(+) exchanger in the base of the colonic crypt. Controls in the colonic crypt intracellular pH (pHi) to direct colonic epithelial cell differentiation into the absorptive enterocyte lineage at the expense of the secretory lineage. This chain is Sodium/hydrogen exchanger 2 (Slc9a2), found in Rattus norvegicus (Rat).